Here is a 580-residue protein sequence, read N- to C-terminus: D-erythrulose kinase (580 aa).

The region spanning 7 to 327 (DPARFTEDML…WAAPADTPAY (321 aa)) is the DhaK domain. Catalysis depends on H217, which acts as the Tele-hemiaminal-histidine intermediate. A disordered region spans residues 329–360 (KGAAQQHVSGERRSEATARSASSGPKLAELSD). Residues 368-570 (RLVARAFDAM…LALCARTVAD (203 aa)) form the DhaL domain. ATP contacts are provided by residues 397–403 (DGDHGRG), 443–444 (TS), G485, R542, and 555–557 (DAG).

The catalysed reaction is D-erythrulose + ATP = D-erythrulose 4-phosphate + ADP + H(+). It functions in the pathway carbohydrate metabolism; erythritol degradation. It participates in carbohydrate metabolism; D-threitol degradation. Catalyzes the phosphorylation of D-erythrulose to D-erythrulose-4P. Involved in the degradation pathways of erythritol and D-threitol, that allow M.smegmatis to grow on these compounds as the sole carbon source. This chain is D-erythrulose kinase, found in Mycolicibacterium smegmatis (strain ATCC 700084 / mc(2)155) (Mycobacterium smegmatis).